A 465-amino-acid polypeptide reads, in one-letter code: Cruciform DNA-recognizing protein 1 (465 aa).

Disordered stretches follow at residues 107 to 227 (EAGG…VPNP) and 247 to 276 (RLNKKEEVPEPVAGPIVESSVTEKSPALPQ). Basic residues predominate over residues 127–151 (NRKKNKRNNKKRRSKLKKKSTKNNK). Phosphoserine is present on residues serine 153 and serine 156. Acidic residues predominate over residues 156 to 165 (SLDDNEEEDG). The X-DNA-binding stretch occupies residues 160–161 (NE). Positions 166–177 (VTGTTTEDVTGT) are enriched in low complexity. Residue threonine 182 is modified to Phosphothreonine. Phosphoserine is present on serine 271. Threonine 295 carries the phosphothreonine modification. The disordered stretch occupies residues 298-465 (VEAVTPLINE…FFGKLKKLFK (168 aa)). Phosphoserine is present on residues serine 319 and serine 343. A compositionally biased stretch (basic and acidic residues) spans 337-363 (LVEKRESTEGVLDGSKKVENKAKKDEE). Phosphothreonine is present on threonine 366. 2 stretches are compositionally biased toward basic and acidic residues: residues 385–398 (AEGRKSPAVSEEKE) and 404–428 (EKGSKEVKRSETSKEKKPSAKEVKK). Serine 394 carries the post-translational modification Phosphoserine. The residue at position 440 (serine 440) is a Phosphoserine. Residues 451 to 465 (KKKTGFFGKLKKLFK) are compositionally biased toward basic residues.

The protein belongs to the CRP1/MDG1 family. Post-translationally, cleaved in the vicinity of position 160 to give an X-DNA-binding N-terminal subpeptide and a non-DNA-binding C-terminal subpeptide.

Its function is as follows. Cruciform DNA-binding protein which exerts an enhancing effect on the cleavage of cruciform DNA (X-DNA) by endonuclease VII from bacteriophage T4. The sequence is that of Cruciform DNA-recognizing protein 1 (CRP1) from Saccharomyces cerevisiae (strain RM11-1a) (Baker's yeast).